Reading from the N-terminus, the 131-residue chain is uncharacterized protein (131 aa).

Transmembrane regions (helical) follow at residues 68 to 88 (VVRATPIIGPYAGLPVIVAPI) and 94 to 114 (VLGAIGVVDITAGIFEDIVAI).

The protein localises to the cell membrane. This is an uncharacterized protein from Methanocaldococcus jannaschii (strain ATCC 43067 / DSM 2661 / JAL-1 / JCM 10045 / NBRC 100440) (Methanococcus jannaschii).